Consider the following 432-residue polypeptide: Enolase 1 (432 aa).

Residue Gln163 participates in (2R)-2-phosphoglycerate binding. Residue Glu205 is the Proton donor of the active site. Residues Asp242, Glu287, and Asp314 each contribute to the Mg(2+) site. The (2R)-2-phosphoglycerate site is built by Lys339, Arg368, Ser369, and Lys390. Lys339 serves as the catalytic Proton acceptor.

It belongs to the enolase family. Mg(2+) serves as cofactor.

It is found in the cytoplasm. The protein localises to the secreted. Its subcellular location is the cell surface. It carries out the reaction (2R)-2-phosphoglycerate = phosphoenolpyruvate + H2O. It participates in carbohydrate degradation; glycolysis; pyruvate from D-glyceraldehyde 3-phosphate: step 4/5. In terms of biological role, catalyzes the reversible conversion of 2-phosphoglycerate (2-PG) into phosphoenolpyruvate (PEP). It is essential for the degradation of carbohydrates via glycolysis. This Lactobacillus johnsonii (strain CNCM I-12250 / La1 / NCC 533) protein is Enolase 1.